The sequence spans 430 residues: Corticosteroid-binding globulin (430 aa).

Residues 1–22 form the signal peptide; the sequence is MLLTLYTCLLWLSTSGLWTIQA. N-linked (GlcNAc...) asparagine glycosylation is found at asparagine 119, asparagine 175, and asparagine 243. Cortisol is bound at residue glutamine 253. Asparagine 259 carries an N-linked (GlcNAc...) asparagine glycan. Glutamine 285 lines the cortisol pocket. Asparagine 326 is a glycosylation site (N-linked (GlcNAc...) asparagine). A cortisol-binding site is contributed by tryptophan 392.

This sequence belongs to the serpin family. In terms of tissue distribution, expressed by the liver; secreted in plasma.

The protein localises to the secreted. Its function is as follows. Major transport protein for glucocorticoids and progestins in the blood of almost all vertebrate species. The sequence is that of Corticosteroid-binding globulin (SERPINA6) from Ovis aries (Sheep).